The sequence spans 316 residues: Phosphatidylglycerol--prolipoprotein diacylglyceryl transferase (316 aa).

The next 3 helical transmembrane spans lie at 18–38, 47–67, and 95–115; these read PIPI…AIWL, GGNP…GIIG, and NGGL…AVFF. Residue R141 coordinates a 1,2-diacyl-sn-glycero-3-phospho-(1'-sn-glycerol). 2 helical membrane passes run 188–208 and 251–271; these read VHPT…LLMW and INTI…FLLK. The tract at residues 292-316 is disordered; it reads AVASPDGKPLPKAGEGIDGETPSTR.

The protein belongs to the Lgt family.

Its subcellular location is the cell membrane. The catalysed reaction is L-cysteinyl-[prolipoprotein] + a 1,2-diacyl-sn-glycero-3-phospho-(1'-sn-glycerol) = an S-1,2-diacyl-sn-glyceryl-L-cysteinyl-[prolipoprotein] + sn-glycerol 1-phosphate + H(+). Its pathway is protein modification; lipoprotein biosynthesis (diacylglyceryl transfer). In terms of biological role, catalyzes the transfer of the diacylglyceryl group from phosphatidylglycerol to the sulfhydryl group of the N-terminal cysteine of a prolipoprotein, the first step in the formation of mature lipoproteins. The sequence is that of Phosphatidylglycerol--prolipoprotein diacylglyceryl transferase from Corynebacterium glutamicum (strain ATCC 13032 / DSM 20300 / JCM 1318 / BCRC 11384 / CCUG 27702 / LMG 3730 / NBRC 12168 / NCIMB 10025 / NRRL B-2784 / 534).